Consider the following 139-residue polypeptide: Small ribosomal subunit protein uS12m (139 aa).

A mitochondrion-targeting transit peptide spans 1–29 (MSWPGLLYGLTTSLSRGLALAPQLWAARS).

It belongs to the universal ribosomal protein uS12 family. In terms of assembly, component of the mitochondrial ribosome small subunit (28S) which comprises a 12S rRNA and about 30 distinct proteins.

It is found in the mitochondrion. This Mus musculus (Mouse) protein is Small ribosomal subunit protein uS12m (Mrps12).